A 288-amino-acid polypeptide reads, in one-letter code: Ankyrin repeat and SOCS box protein 8 (288 aa).

Ser-17 is modified (phosphoserine). ANK repeat units lie at residues 52–81 (GTLK…EVNA), 85–113 (YNRT…NPNA), 117–146 (NRDT…SVNA), and 150–179 (NNDT…EVRV). An SOCS box domain is found at 235 to 288 (QLCEKLTVLCSAPGTLKTLARYTVRRSLGLQYLPDAVKGLPLPASLKEYLLLLE).

Belongs to the ankyrin SOCS box (ASB) family. Interacts with TBK1; this interaction promotes TBK1 proteasomal degradation. Post-translationally, phosphorylated by TBK1.

The protein localises to the cytoplasm. It functions in the pathway protein modification; protein ubiquitination. May be a substrate-recognition component of a SCF-like ECS (Elongin-Cullin-SOCS-box protein) E3 ubiquitin-protein ligase complex which mediates the ubiquitination and subsequent proteasomal degradation of target proteins. Inhibits IFN-beta production through the IRF3 signaling pathway by targeting TBK1 via 'Lys-48'-linked ubiquitination, leading to its proteasomal degradation. In Pongo abelii (Sumatran orangutan), this protein is Ankyrin repeat and SOCS box protein 8 (ASB8).